The chain runs to 462 residues: L-seryl-tRNA(Sec) selenium transferase (462 aa).

Lys293 is modified (N6-(pyridoxal phosphate)lysine).

This sequence belongs to the SelA family. It depends on pyridoxal 5'-phosphate as a cofactor.

It localises to the cytoplasm. It carries out the reaction L-seryl-tRNA(Sec) + selenophosphate + H(+) = L-selenocysteinyl-tRNA(Sec) + phosphate. It functions in the pathway aminoacyl-tRNA biosynthesis; selenocysteinyl-tRNA(Sec) biosynthesis; selenocysteinyl-tRNA(Sec) from L-seryl-tRNA(Sec) (bacterial route): step 1/1. Converts seryl-tRNA(Sec) to selenocysteinyl-tRNA(Sec) required for selenoprotein biosynthesis. This chain is L-seryl-tRNA(Sec) selenium transferase, found in Clostridium botulinum (strain 657 / Type Ba4).